A 1331-amino-acid chain; its full sequence is MFDRTVNAKFKPASSNAGPGNNPVRRNSMLTPSRGVTIGGTGGNIRKLTKVSSLTSNHHFAVCYPPSNIYQNSNNAGSNSALQRTTSESLRLNMMSRVAAGATPTTVSRASSNSSLATSTSTSLAPKSSSSSGGSNSTPQQQQQQLVSSNNSSSSSNNSFTKASSPNNNGARSVGGAATSAATGTTAAAGSHHHQPHHHHHHHHHHHQHHNHQQQQQQQTSLSQGHASLTVAGGSASAGGGGGGGSGSSSGTAAGGTNRKPKTTSSFEITSVTVGHPKLNAAGDTGDESADDLDESHTDDNSRITDLENETPSMSEDTFSKEEVYYANNALSTNAPVIPTSSQYGLVVVDPIAPSLGQTIQNVQVNVSDNIINVVSGAVTPGGTKKKDDIKETQHRSERFKVVKIESTEPFKRGRWMCMDYLDHSSVGNGGNNNEKTGSSTSEAHAATTDGGAAGVGAGSEAPAHKTTQSMILPPTQKLNENHLEANSTDANWNYAEQQQQQQQQQQQQQTIVGNALTKTLPVALRNVSRSSSVTRSPNATVEFLSPNLLAQQQQQQQQLFDSVNANAASSPNPAGDPNNMDYARTAAMQLHQTLQQLKQREDAMDVPPGAGGYANYQNGGDSAVGAASNNNSAAAATGESQLSTSYVEQQQQQQQPLSPAPLTPQAAPTFAAVAAGQSPNFQLEQQQQQQQATSQIDGIVPQPFNPQQQQQQTPQQSTAQQAAAAANATSAVTAPPPQQTSNTSNAAVTTGQGQTMPLLSHMTSYEQQQPNLGAAAAAAAAGGTAATSVAAPQAIPTLQLQSAPSTIADPQQLMVPQQQQQQQHQEEQQQQPQQQQQPLPPANIASASANNSNLNLTNTNVVATGEATTNALTLTDEQATAALAAAFATGAAAAATGATSAAAATQQQIQQLQQQPNAESETESFITASNPGGNRKRAFSNPHIGGPNDPSFMHRLNPQLYYYNKSQSGRSSFCVDESLWPTNNPNGAVSDTNLYMGSSTDEDYEEAIDQFSPTIYTTRSASRAIPIPNSAGSSPQHQMHHSQPRIAIGINQMEGGGPTRSTGAFSASPSIYAYPHSPFYASSPETSFGSAAMPGHPAASSRISFSYDPAFQRLQVPNASGDRRPRSPLECASVFAAVAAAATCGDAAGGAADTVISSASGTSAVAIDNKIEQAMDLVKSHLMIAVREEVEVLKERISELMDKINKLELENSILKSNIPQETLQQLQLQLQLAAPPATPAIQAAPAVQSVVAPAAAGQAVQQQAAGAVAVTGVATSPASAVVPTSIPNGSAENGSSAVESAAVSVEQQVQQVTSAAAAAASVVTANGPMS.

Disordered stretches follow at residues 1–35 (MFDR…PSRG), 101–317 (GATP…MSED), 429–471 (NGGN…TQSM), 553–582 (QQQQ…NNMD), 597–665 (QLKQ…PLTP), 681–750 (NFQL…AAVT), 814–853 (LMVP…ANNS), and 908–950 (QQIQ…GPND). Residues 13–31 (ASSNAGPGNNPVRRNSMLT) are compositionally biased toward polar residues. Composition is skewed to low complexity over residues 106–165 (TVSR…KASS) and 175–190 (GGAA…AAAG). Basic residues predominate over residues 191–212 (SHHHQPHHHHHHHHHHHQHHNH). Residues 236–248 (ASAGGGGGGGSGS) are compositionally biased toward gly residues. Residues 263 to 273 (TTSSFEITSVT) are compositionally biased toward polar residues. The segment covering 285-294 (TGDESADDLD) has biased composition (acidic residues). A compositionally biased stretch (basic and acidic residues) spans 295 to 306 (ESHTDDNSRITD). Residues 432–443 (NNNEKTGSSTSE) show a composition bias toward polar residues. 3 stretches are compositionally biased toward low complexity: residues 553 to 580 (QQQQ…DPNN), 614 to 641 (YANY…TGES), and 701 to 734 (VPQP…SAVT). Over residues 740-750 (QTSNTSNAAVT) the composition is skewed to polar residues. Positions 917-933 (PNAESETESFITASNPG) are enriched in polar residues. Positions 1194–1215 (LKERISELMDKINKLELENSIL) are leucine-zipper.

The protein belongs to the TSC-22/Dip/Bun family.

It is found in the cytoplasm. It localises to the nucleus. Probable transcription factor required for peripheral nervous system morphogenesis, eye development and oogenesis. May be required for the transmission of the dpp signal and for a morphogenetic movement of the medulla in the brain that reorients the second optic lobe relative to the first. Plays a role in determining proper dorsal cell fates leading to the formation of the dorsal appendages. This Drosophila melanogaster (Fruit fly) protein is Protein bunched, class 2/F/G isoform (bun).